The chain runs to 266 residues: Enterotoxin type C-3 (266 aa).

A signal peptide spans 1–27 (MYKRLFISRVILIFALILVISTPNVLA). Zn(2+) contacts are provided by aspartate 36 and aspartate 110. The cysteines at positions 120 and 137 are disulfide-linked. Histidine 145 and histidine 149 together coordinate Zn(2+).

Belongs to the staphylococcal/streptococcal toxin family. As to quaternary structure, interacts with MHC class II molecules composed of alpha/HLA-DRA and beta/HLA-DRB1 chains. Interacts with host T-cell receptor/TCR beta variable chain TRBV8-2.

The protein localises to the secreted. Its function is as follows. Staphylococcal enterotoxin that activates the host immune system by binding as unprocessed molecules to major histocompatibility (MHC) complex class II and T-cell receptor (TCR) molecules. In turn, this ternary complex activates a large number of T-lymphocytes initiating a systemic release of pro-inflammatory cytokines. Also causes the intoxication staphylococcal food poisoning syndrome. The sequence is that of Enterotoxin type C-3 (entC3) from Staphylococcus aureus.